Here is a 934-residue protein sequence, read N- to C-terminus: Protein unc-45 homolog B (934 aa).

TPR repeat units follow at residues 9–42 (SVQL…CKKE), 48–81 (AVIY…DAAD), and 83–115 (KALY…EPKN). ARM repeat units follow at residues 174–213 (DAGA…GMCT), 216–255 (RARA…CVND), and 753–792 (DKLR…NLVC).

Interacts with apobec2a, apobec2b, hsp90a.1, hsp90a.2, hsp90ab1 and myosin. As to expression, expressed in striated muscle tissue including somites, heart and craniofacial muscle. Detected in mesoderm adjacent to the dorsal midline during the late gastrula stages and in somitic mesoderm during development of trunk skeletal muscle. Also expressed in cranial skeletal muscle and in cardiac and smooth muscle. Detected in somitic muscle and heart primordium of 24 hour embryos. At later stages, expressed in muscles of pectoral fins, jaw, branchial arches and eye.

Its subcellular location is the cytoplasm. The protein resides in the myofibril. It is found in the sarcomere. It localises to the z line. The protein localises to the a band. Its subcellular location is the perinuclear region. Its function is as follows. Acts as a co-chaperone for HSP90 and is required for proper folding of the myosin motor domain. Plays a role in sarcomere formation during muscle cell development. Required for myoseptal integrity, myofiber attachment, motility and craniofacial development. Is necessary for normal early lens development. In Danio rerio (Zebrafish), this protein is Protein unc-45 homolog B.